Consider the following 241-residue polypeptide: Accessory protein p30II (241 aa).

Short sequence motifs (nuclear localization signal) lie at residues 73-78 and 91-98; these read RRCRSR and GPRRSRPR. 2 stretches are compositionally biased toward low complexity: residues 79–100 and 107–136; these read CVSPRGGAFSPGGPRRSRPRLS and PSSTASSSSLSFNSSSKDNSPSTNSSTSRS. Residues 79 to 151 form a disordered region; it reads CVSPRGGAFS…GKHRNSPADT (73 aa). Residues 175–184 carry the Mitochondrial targeting signal motif; sequence LRVWRLCTRR.

It belongs to the HTLV-1 accessory protein p30II family. P30II binds to the KIX domains of CREBBP and EP300.

It localises to the host nucleus. The protein resides in the host nucleolus. Its subcellular location is the host mitochondrion inner membrane. In terms of biological role, p30II is a multifunctional regulator that sequesters EP300/CREBBP and down-regulates CREB-responsive element (CRE) and Tax-responsive element (TRE) mediated transcription. Specifically binds and represses tax/rex mRNA nuclear export. Since Tax and Rex are positive regulators of viral gene expression, their inhibition by p30II reduces virion production, and allows the virus to escape the host immune surveillance and persist latently in an immune-competent host. Its function is as follows. p13II increases mitochondrial permeability to monovalent cations, producing a rapid, membrane potential-dependent influx of potassium. This could involve a channel-forming activity. Interferes with cell proliferation and transformation and promotes apoptosis induced by ceramide and Fas ligand, probably using the Ras signaling. This chain is Accessory protein p30II, found in Human T-cell leukemia virus 1 (strain Japan ATK-1 subtype A) (HTLV-1).